We begin with the raw amino-acid sequence, 91 residues long: Cell division protein FtsB (91 aa).

Topologically, residues M1–F3 are cytoplasmic. The helical transmembrane segment at I4 to I21 threads the bilayer. The Periplasmic portion of the chain corresponds to S22–P91. The stretch at L26–G74 forms a coiled coil.

The protein belongs to the FtsB family. Part of a complex composed of FtsB, FtsL and FtsQ.

It localises to the cell inner membrane. Functionally, essential cell division protein. May link together the upstream cell division proteins, which are predominantly cytoplasmic, with the downstream cell division proteins, which are predominantly periplasmic. In Nitrosococcus oceani (strain ATCC 19707 / BCRC 17464 / JCM 30415 / NCIMB 11848 / C-107), this protein is Cell division protein FtsB.